A 434-amino-acid polypeptide reads, in one-letter code: Beta-enolase (434 aa).

The residue at position 2 (A2) is an N-acetylalanine. Position 72 is a phosphothreonine (T72). A phosphoserine mark is found at S83 and S157. H158 and E167 together coordinate substrate. S176 bears the Phosphoserine mark. A Phosphothreonine modification is found at T205. E210 (proton donor) is an active-site residue. At T229 the chain carries Phosphothreonine. Y236 is modified (phosphotyrosine). D245 provides a ligand contact to Mg(2+). Position 263 is a phosphoserine (S263). The substrate site is built by E293 and D318. Positions 293 and 318 each coordinate Mg(2+). Catalysis depends on K343, which acts as the Proton acceptor. Residues 370-373 (SHRS) and K394 contribute to the substrate site.

Belongs to the enolase family. Mammalian enolase is composed of 3 isozyme subunits, alpha, beta and gamma, which can form homodimers or heterodimers which are cell-type and development-specific. Interacts with PNKD. Requires Mg(2+) as cofactor. As to expression, the alpha/alpha homodimer is expressed in embryo and in most adult tissues. The alpha/beta heterodimer and the beta/beta homodimer are found in striated muscle, and the alpha/gamma heterodimer and the gamma/gamma homodimer in neurons.

It is found in the cytoplasm. The catalysed reaction is (2R)-2-phosphoglycerate = phosphoenolpyruvate + H2O. The protein operates within carbohydrate degradation; glycolysis; pyruvate from D-glyceraldehyde 3-phosphate: step 4/5. In terms of biological role, glycolytic enzyme that catalyzes the conversion of 2-phosphoglycerate to phosphoenolpyruvate. Appears to have a function in striated muscle development and regeneration. This is Beta-enolase (ENO3) from Oryctolagus cuniculus (Rabbit).